The following is a 422-amino-acid chain: 3-phosphoshikimate 1-carboxyvinyltransferase (422 aa).

3-phosphoshikimate is bound by residues lysine 20, serine 21, and arginine 25. Lysine 20 serves as a coordination point for phosphoenolpyruvate. Glycine 91 and arginine 119 together coordinate phosphoenolpyruvate. Positions 163, 164, 165, 305, 328, and 332 each coordinate 3-phosphoshikimate. Glutamine 165 contacts phosphoenolpyruvate. Aspartate 305 serves as the catalytic Proton acceptor. Positions 336 and 377 each coordinate phosphoenolpyruvate.

The protein belongs to the EPSP synthase family. Monomer.

It localises to the cytoplasm. It carries out the reaction 3-phosphoshikimate + phosphoenolpyruvate = 5-O-(1-carboxyvinyl)-3-phosphoshikimate + phosphate. The protein operates within metabolic intermediate biosynthesis; chorismate biosynthesis; chorismate from D-erythrose 4-phosphate and phosphoenolpyruvate: step 6/7. Catalyzes the transfer of the enolpyruvyl moiety of phosphoenolpyruvate (PEP) to the 5-hydroxyl of shikimate-3-phosphate (S3P) to produce enolpyruvyl shikimate-3-phosphate and inorganic phosphate. This is 3-phosphoshikimate 1-carboxyvinyltransferase from Ruminiclostridium cellulolyticum (strain ATCC 35319 / DSM 5812 / JCM 6584 / H10) (Clostridium cellulolyticum).